Reading from the N-terminus, the 170-residue chain is Bifunctional protein PyrR (170 aa).

The PRPP-binding signature appears at 90 to 102 (LVLVDDVLMSGRT).

The protein belongs to the purine/pyrimidine phosphoribosyltransferase family. PyrR subfamily.

The enzyme catalyses UMP + diphosphate = 5-phospho-alpha-D-ribose 1-diphosphate + uracil. In terms of biological role, regulates the transcription of the pyrimidine nucleotide (pyr) operon in response to exogenous pyrimidines. Functionally, also displays a weak uracil phosphoribosyltransferase activity which is not physiologically significant. This is Bifunctional protein PyrR from Pseudomonas aeruginosa (strain LESB58).